Here is a 230-residue protein sequence, read N- to C-terminus: MENQPKLNSSKEVIAFLAERFPQCFSAEGEARPLKIGIFQDLVERVEGEMNLSKTQLRSALRLYTSSWRYLYGIKPGATRVDLDGNPCGVLEEQHVEHARKQLEEAKARVQAQRAEQQAKKREAAGAEGEENGAERRERKPRPAPRRKDNAERKPRAAKPAAAAKPSRPAREERHTPVSDITALSVGQAIKVKAGNNAMDATVQEITKDGVRVQLTSGMSMIVRAEHLVF.

A disordered region spans residues 106 to 181; sequence AKARVQAQRA…EERHTPVSDI (76 aa). Residues 146–155 show a composition bias toward basic and acidic residues; it reads RRKDNAERKP. The segment covering 158–167 has biased composition (low complexity); the sequence is AKPAAAAKPS.

The protein belongs to the ProQ family.

It is found in the cytoplasm. Its function is as follows. RNA chaperone with significant RNA binding, RNA strand exchange and RNA duplexing activities. May regulate ProP activity through an RNA-based, post-transcriptional mechanism. The chain is RNA chaperone ProQ from Cronobacter sakazakii (strain ATCC BAA-894) (Enterobacter sakazakii).